The following is a 118-amino-acid chain: uncharacterized protein (118 aa).

Positions 1 to 27 are cleaved as a signal peptide; the sequence is MPIKEPDVWALIWSWLQTNLSSSSAQS.

This is an uncharacterized protein from Haemophilus influenzae (strain ATCC 51907 / DSM 11121 / KW20 / Rd).